Here is a 358-residue protein sequence, read N- to C-terminus: C-X-C chemokine receptor type 4-B (358 aa).

The important for chemokine binding and signaling stretch occupies residues 1-25 (MDGFSGGIDINIFDGNSTENGSGDF). The Extracellular segment spans residues 1–44 (MDGFSGGIDINIFDGNSTENGSGDFEDFIEPCFMQENSDFNRIF). Asn-16 and Asn-20 each carry an N-linked (GlcNAc...) asparagine glycan. 2 disulfides stabilise this stretch: Cys-32/Cys-281 and Cys-113/Cys-190. A helical transmembrane segment spans residues 45–67 (LPTIYSFIFLLGIIGNGLVVVVM). Residues 68 to 81 (GYQKKSRTMTDKYR) lie on the Cytoplasmic side of the membrane. Residues 82 to 103 (LHLSVADLLFVFTLPFWSVDAA) traverse the membrane as a helical segment. The tract at residues 98–101 (WSVD) is chemokine binding. The Extracellular portion of the chain corresponds to 104-114 (IGWYFKEFLCK). Residues 115–134 (AVHVIYTVNLYSSVLILAFI) form a helical membrane-spanning segment. The tract at residues 117 to 121 (HVIYT) is chemokine binding. Topologically, residues 135 to 158 (SLDRYLAIVHATNSQGSRKMLADK) are cytoplasmic. The involved in dimerization; when bound to chemokine stretch occupies residues 139–151 (YLAIVHATNSQGS). A helical membrane pass occupies residues 159–178 (VVYAGVWLPALLLTVPDLVF). The Extracellular segment spans residues 179 to 202 (ASVSNENGQFVCDRIYPIDNRETW). Residues 190 to 194 (CDRIY) form a chemokine binding, important for signaling region. A helical membrane pass occupies residues 203-223 (TVGFRFLHITVGLILPGLIIL). The Cytoplasmic portion of the chain corresponds to 224–248 (VCYCVIISKLSHSKGHQKRKALKTT). The helical transmembrane segment at 249–268 (VILILAFFACWLPYYVCLTT) threads the bilayer. The Extracellular portion of the chain corresponds to 269 to 289 (DTFMMLGLVKADCIWENTLHK). A helical transmembrane segment spans residues 290–309 (AISITEALAFFHCCLNPILY). Residues 310-358 (AFLGAKFKKSAQNAFTSVSRGSSLKILSKKRAGLSSVSTESESSSFHSS) are Cytoplasmic-facing. The tract at residues 338–358 (KKRAGLSSVSTESESSSFHSS) is disordered. Over residues 344–358 (SSVSTESESSSFHSS) the composition is skewed to low complexity.

It belongs to the G-protein coupled receptor 1 family. In terms of assembly, monomer. Can form dimers. Sulfation is required for efficient binding of cxcl12/sdf-1alpha and promotes its dimerization. In terms of processing, O- and N-glycosylated.

It localises to the cell membrane. Its subcellular location is the cytoplasm. It is found in the nucleus. The protein resides in the early endosome. The protein localises to the late endosome. It localises to the lysosome. Functionally, receptor for the C-X-C chemokine cxcl12/sdf-1. Transduces a signal by increasing the intracellular level of calcium ions. Signaling with cxcl12/sdf-1 mediates the directional movement of mesodermal cells during gastrulation. May play a role in the migration of embryonic presumptive primordial germ cells (pPGCs). May also be involved in regulating migration of hematopoietic stem cells into the larval liver. This Xenopus laevis (African clawed frog) protein is C-X-C chemokine receptor type 4-B (cxcr4-b).